Consider the following 715-residue polypeptide: Transcription activator of gluconeogenesis MGYG_02011 (715 aa).

The segment covering 1–14 (MSPHQTTGQESDNM) has biased composition (polar residues). The segment at 1 to 28 (MSPHQTTGQESDNMAVNGENAPASSQYI) is disordered. Positions 66–94 (CYACQRGHLTCGDERPCQRCIKRGFQDAC) form a DNA-binding region, zn(2)-C6 fungal-type. Polar residues-rich tracts occupy residues 129–166 (QNNV…PQNK), 179–191 (YASQ…TYQI), 203–223 (SLPQ…GQFN), and 362–385 (MMTT…RPNA). 4 disordered regions span residues 129–223 (QNNV…GQFN), 354–414 (SPAS…RRRH), 534–569 (NHNV…NSST), and 628–663 (GSNG…NGRG). Residues 386-400 (SVSQQRQQPVVSTPQ) are compositionally biased toward low complexity. Polar residues-rich tracts occupy residues 535–554 (HNVN…SRGS) and 639–649 (GEASSSEANEL). Low complexity predominate over residues 650–662 (NGSNANGATTNGR).

The protein belongs to the ERT1/acuK family.

It localises to the nucleus. In terms of biological role, transcription factor which regulates nonfermentable carbon utilization. Activator of gluconeogenetic genes. This is Transcription activator of gluconeogenesis MGYG_02011 from Arthroderma gypseum (strain ATCC MYA-4604 / CBS 118893) (Microsporum gypseum).